The following is a 177-amino-acid chain: Large ribosomal subunit protein uL6 (177 aa).

Belongs to the universal ribosomal protein uL6 family. In terms of assembly, part of the 50S ribosomal subunit.

Its function is as follows. This protein binds to the 23S rRNA, and is important in its secondary structure. It is located near the subunit interface in the base of the L7/L12 stalk, and near the tRNA binding site of the peptidyltransferase center. The sequence is that of Large ribosomal subunit protein uL6 from Methylorubrum extorquens (strain CM4 / NCIMB 13688) (Methylobacterium extorquens).